The chain runs to 2871 residues: Fibrillin-1 (2871 aa).

Positions 1–24 (MRRGRLLEVALGFTVLLASYTSHR) are cleaved as a signal peptide. Positions 25-44 (AEANLEAGNGKETRASRAKR) are excised as a propeptide. Basic and acidic residues predominate over residues 29-39 (LEAGNGKETRA). Positions 29–49 (LEAGNGKETRASRAKRRGGGG) are disordered. The tract at residues 45–81 (RGGGGHDALKGPNVCGSRYNAYCCPGWKTLPGGNQCI) is fibrillin unique N-terminal (FUN) domain. Residues 45–450 (RGGGGHDALK…PPRVLPVNVT (406 aa)) form an N-terminal domain region. 11 disulfide bridges follow: Cys59-Cys68, Cys67-Cys80, Cys85-Cys94, Cys89-Cys100, Cys102-Cys111, Cys119-Cys129, Cys123-Cys134, Cys136-Cys145, Cys150-Cys160, Cys154-Cys166, and Cys168-Cys177. EGF-like domains lie at 81-112 (IVPICRHSCGDGFCSRPNMCTCPSGQIAPSCG), 115-146 (SIQHCNIRCMNGGSCSDDHCLCQKGYIGTHCG), and 147-178 (QPVCESGCLNGGRCVAPNRCACTYGFTGPQCE). Residues 119 to 329 (CNIRCMNGGS…YTSPDGTRCI (211 aa)) form an interaction with MFAP4 region. In terms of domain architecture, TB 1 spans 184–236 (GPCFTVVSNQMCQGQLSGIVCTKTLCCATVGRAWGHPCEMCPAQPHPCRRGFI). The tract at residues 195-221 (CQGQLSGIVCTKTLCCATVGRAWGHPC) is hybrid domain 1. The EGF-like 4; calcium-binding domain occupies 246-287 (DVDECQAIPGLCQGGNCINTVGSFECKCPAGHKFNEVSQKCE). Intrachain disulfides connect Cys250-Cys262, Cys257-Cys271, Cys273-Cys286, Cys292-Cys304, Cys299-Cys313, and Cys315-Cys328. Ser268 is a glycosylation site (O-linked (Glc) serine). Residues 288-329 (DIDECSTIPGICDGGECTNTVSSYFCKCPPGFYTSPDGTRCI) enclose the EGF-like 5; calcium-binding domain. Residues 334-389 (GYCYTALTNGRCSNQLPQSITKMQCCCDVGRCWSPGVTVTPEMCPIRATEDFNKLC) enclose the TB 2 domain. An N-linked (GlcNAc...) asparagine glycan is attached at Asn448. The EGF-like 6 domain maps to 449–489 (VTDYCQLFRYLCHNGRCIPTPGSYRCECNKGFQLDLRGECI). 15 disulfide bridges follow: Cys453-Cys465, Cys460-Cys474, Cys476-Cys488, Cys494-Cys504, Cys499-Cys513, Cys515-Cys528, Cys534-Cys546, Cys541-Cys555, Cys557-Cys570, Cys576-Cys587, Cys582-Cys596, Cys598-Cys611, Cys617-Cys628, Cys623-Cys637, and Cys639-Cys652. Residue Ser471 is glycosylated (O-linked (Glc) serine). An EGF-like 7; calcium-binding domain is found at 490–529 (DVDECEKNPCAGGECINNQGSYTCQCRPGYQSTLTRTECR). A glycan (O-linked (Glc) serine) is linked at Ser510. The EGF-like 8; calcium-binding domain occupies 530–571 (DIDECLQNGRICNNGRCINTDGSFHCVCNAGFHVTRDGKNCE). Residues 572–612 (DMDECSIRNMCLNGMCINEDGSFKCICKPGFQLASDGRYCK) form the EGF-like 9; calcium-binding domain. The region spanning 613–653 (DINECETSGICMNGRCVNTDGSYRCECFPGLAVGLDGRVCV) is the EGF-like 10; calcium-binding domain. Residues 659 to 711 (STCYGGYKRGQCVKPLFGAVTKSECCCASTEYAFGEPCQPCPSQNSAEYQALC) enclose the TB 3 domain. The EGF-like 11; calcium-binding domain occupies 723–764 (DINECALDPDICPNGICENLRGTYKCICNSGYEVDSTGKNCV). 16 disulfides stabilise this stretch: Cys727-Cys739, Cys734-Cys748, Cys750-Cys763, Cys769-Cys781, Cys776-Cys790, Cys792-Cys805, Cys811-Cys821, Cys816-Cys830, Cys832-Cys845, Cys853-Cys875, Cys862-Cys887, Cys876-Cys890, Cys896-Cys908, Cys914-Cys926, Cys921-Cys935, and Cys937-Cys950. The 42-residue stretch at 765 to 806 (DINECVLNSLLCDNGQCRNTPGSFVCTCPKGFIYKPDLKTCE) folds into the EGF-like 12; calcium-binding domain. The EGF-like 13; calcium-binding domain maps to 807–846 (DIDECESSPCINGVCKNSPGSFICECSSESTLDPTKTICI). The TB 4 domain occupies 851–902 (GTCWQTIIDGRCEININGATLKSQCCSSLGAAWGSPCTPCQVDPICGKGYSR). Residues 862 to 887 (CEININGATLKSQCCSSLGAAWGSPC) are hybrid domain 2. The EGF-like 14; calcium-binding domain occupies 910–951 (DIDECEVFPGVCKNGLCVNSKGSFKCQCPNGMTLDATGRICL). The region spanning 956–1008 (ETCFLRYEDEECTLPVVGRHRMDACCCSVGAAWGTEECEECPPRNTPEYEELC) is the TB 5 domain. Residues 1028-1069 (DINECKMIPNLCTHGKCRNTIGSFKCRCDSGFALDSEERNCI) form the EGF-like 15; calcium-binding domain. 43 disulfide bridges follow: Cys1032-Cys1044, Cys1039-Cys1053, Cys1055-Cys1068, Cys1074-Cys1086, Cys1081-Cys1095, Cys1097-Cys1111, Cys1117-Cys1129, Cys1124-Cys1138, Cys1140-Cys1153, Cys1159-Cys1171, Cys1201-Cys1212, Cys1208-Cys1221, Cys1223-Cys1236, Cys1242-Cys1254, Cys1249-Cys1263, Cys1265-Cys1278, Cys1284-Cys1296, Cys1291-Cys1305, Cys1307-Cys1320, Cys1326-Cys1339, Cys1333-Cys1348, Cys1350-Cys1361, Cys1367-Cys1380, Cys1374-Cys1389, Cys1391-Cys1402, Cys1408-Cys1420, Cys1415-Cys1429, Cys1450-Cys1461, Cys1456-Cys1470, Cys1472-Cys1485, Cys1491-Cys1502, Cys1497-Cys1511, Cys1513-Cys1526, Cys1534-Cys1562, Cys1549-Cys1574, Cys1563-Cys1577, Cys1564-Cys1589, Cys1610-Cys1622, Cys1617-Cys1631, Cys1633-Cys1646, Cys1652-Cys1663, Cys1658-Cys1672, and Cys1674-Cys1687. Residues 1070 to 1112 (DIDECRISPDLCGRGQCVNTPGDFECKCDEGYESGFMMMKNCM) enclose the EGF-like 16; calcium-binding domain. In terms of domain architecture, EGF-like 17; calcium-binding spans 1113–1154 (DIDECQRDPLLCRGGVCLNTEGSYRCECPSGHQMSPNISACI). Ser1135 is a glycosylation site (O-linked (Glc) serine). A glycan (N-linked (GlcNAc...) asparagine) is linked at Asn1149. Positions 1155–1196 (DINECELSAHLCPHGRCVNLIGKYQRARNPGYHSTPDRLFCV) constitute an EGF-like 18; calcium-binding domain. The region spanning 1197 to 1237 (DIDECSIMNGGCETFCTNSEGSYECSCQPGFALMPDQRSCT) is the EGF-like 19; calcium-binding domain. Ser1218 carries an O-linked (Glc) serine glycan. The EGF-like 20; calcium-binding domain occupies 1238–1279 (DIDECEDNPNICDGGQCTNIPGEYRCLCYDGFMASEDMKTCV). An EGF-like 21; calcium-binding domain is found at 1280-1321 (DVNECDLNPNICLSGTCENTKGSFICHCDMGYSGKKGKTGCT). Ser1302 carries an O-linked (Glc) serine glycan. The 41-residue stretch at 1322–1362 (DINECEIGAHNCDRHAVCTNTAGSFNCSCSPGWIGDGIKCT) folds into the EGF-like 22; calcium-binding domain. A glycan (O-linked (Glc) serine) is linked at Ser1345. Asn1347 carries N-linked (GlcNAc...) asparagine glycosylation. An EGF-like 23; calcium-binding domain is found at 1363-1403 (DLDECSNGTHMCSQHADCKNTMGSYRCLCKEGYTGDGFTCA). Residue Asn1369 is glycosylated (N-linked (GlcNAc...) asparagine). Ser1386 carries an O-linked (Glc) serine glycan. An EGF-like 24; calcium-binding domain is found at 1404-1445 (DLDECSENVKLCGNVQCLYAPGGYHCEYDMGFVPSADRKSCV). The region spanning 1446–1486 (DSDECSLPNICVFGTCHNLPGLFRCECEIGYELDRSGGNCT) is the EGF-like 25; calcium-binding domain. N-linked (GlcNAc...) asparagine glycosylation occurs at Asn1484. The EGF-like 26; calcium-binding domain occupies 1487-1527 (DVNECLEPPTCISGNCVNTPGSYTCVCPPDFELNPTRVGCV). Ser1508 carries O-linked (Glc) serine glycosylation. The segment at 1528 to 2731 (DTRSGNCYLD…GYPKRGRKRR (1204 aa)) is C-terminal domain. A TB 6 domain is found at 1532-1589 (GNCYLDVRPRGDNGDTACSNEIGVGVSKASCCCSLGKAWGTPCEQCPPVNTSEYKILC). Residues 1541-1543 (RGD) carry the Cell attachment site motif. A glycan (N-linked (GlcNAc...) asparagine) is linked at Asn1581. Positions 1606–1647 (DIDECQELPGLCQGGKCINTFGSFQCRCPTGYYLNEDTRVCD) constitute an EGF-like 27; calcium-binding domain. The O-linked (Glc) serine glycan is linked to Ser1628. Residues 1648–1688 (DVNECETPGICGPGTCYNTVGNYTCICPPDYMQVNGGNNCM) enclose the EGF-like 28; calcium-binding domain. A glycan (N-linked (GlcNAc...) asparagine) is linked at Asn1669. The 56-residue stretch at 1693–1748 (SLCYRNYYADNQTCDGELLFNMTKKMCCCSYNIGRAWNKPCEQCPIPSTDEFATLC) folds into the TB 7 domain. Asn1703 and Asn1713 each carry an N-linked (GlcNAc...) asparagine glycan. The 42-residue stretch at 1766–1807 (DIDECREIPGVCENGVCINMVGSFRCECPVGFFYNDKLLVCE) folds into the EGF-like 29; calcium-binding domain. 40 cysteine pairs are disulfide-bonded: Cys1770-Cys1782, Cys1777-Cys1791, Cys1793-Cys1806, Cys1812-Cys1824, Cys1818-Cys1833, Cys1835-Cys1847, Cys1853-Cys1865, Cys1860-Cys1874, Cys1876-Cys1889, Cys1895-Cys1905, Cys1900-Cys1914, Cys1916-Cys1928, Cys1934-Cys1947, Cys1942-Cys1956, Cys1958-Cys1971, Cys1977-Cys1989, Cys1984-Cys1998, Cys2000-Cys2011, Cys2017-Cys2029, Cys2024-Cys2038, Cys2040-Cys2053, Cys2061-Cys2083, Cys2070-Cys2096, Cys2084-Cys2099, Cys2085-Cys2111, Cys2131-Cys2142, Cys2137-Cys2151, Cys2153-Cys2164, Cys2170-Cys2181, Cys2176-Cys2190, Cys2192-Cys2204, Cys2210-Cys2221, Cys2217-Cys2230, Cys2232-Cys2245, Cys2251-Cys2265, Cys2258-Cys2274, Cys2276-Cys2289, Cys2295-Cys2307, Cys2302-Cys2316, and Cys2318-Cys2331. The EGF-like 30; calcium-binding domain occupies 1808–1848 (DIDECQNGPVCQRNAECINTAGSYRCDCKPGYRFTSTGQCN). O-linked (Glc) serine glycosylation is present at Ser1830. Residues 1849-1890 (DRNECQEIPNICSHGQCIDTVGSFYCLCHTGFKTNADQTMCL) form the EGF-like 31; calcium-binding domain. O-linked (Glc) serine glycosylation is present at Ser1871. One can recognise an EGF-like 32; calcium-binding domain in the interval 1891–1929 (DINECERDACGNGTCRNTIGSFNCRCNHGFILSHNNDCI). A glycan (N-linked (GlcNAc...) asparagine) is linked at Asn1902. O-linked (Glc) serine glycosylation is present at Ser1911. The EGF-like 33; calcium-binding domain maps to 1930–1972 (DVDECATGNGNLCRNGQCINTVGSFQCQCNEGYEVAPDGRTCV). Ser1953 carries an O-linked (Glc) serine glycan. Residues 1973 to 2012 (DINECLLEPGKCAPGTCQNLDGSYRCICPPGYSLQNDKCE) enclose the EGF-like 34; calcium-binding domain. The region spanning 2013–2054 (DIDECVEEPEICALGTCSNTEGSFKCLCPDGFSLSSTGRRCQ) is the EGF-like 35; calcium-binding domain. Ser2035 carries O-linked (Glc) serine glycosylation. In terms of domain architecture, TB 8 spans 2059–2111 (SYCYAKFEGGKCSSPKSRNHSKQECCCALKGEGWGDPCELCPTEPDEAFRQIC). Asn2077 carries an N-linked (GlcNAc...) asparagine glycan. Residues 2127–2165 (DMDECKEPDVCKHGQCINTDGSYRCECPFGYILEGNECV) enclose the EGF-like 36; calcium-binding domain. An O-linked (Glc) serine glycan is attached at Ser2148. Residues 2166-2205 (DTDECSVGNPCGNGTCKNVIGGFECTCEEGFEPGPMMTCE) form the EGF-like 37; calcium-binding domain. An N-linked (GlcNAc...) asparagine glycan is attached at Asn2178. The region spanning 2206-2246 (DINECAQNPLLCAFRCVNTYGSYECKCPTGYVLREDRRMCK) is the EGF-like 38; calcium-binding domain. Ser2227 carries O-linked (Glc) serine glycosylation. One can recognise an EGF-like 39; calcium-binding domain in the interval 2247–2290 (DEDECEEGKHDCAEKQMECKNLIGMYICICGPGYQRRPDGEGCV). The EGF-like 40; calcium-binding domain maps to 2291 to 2332 (DENECQTKPGICENGRCLNTRGSYTCECNDGFTASPTQDECL). A glycan (O-linked (Glc) serine) is linked at Ser2313. The TB 9 domain maps to 2337–2390 (GYCFTEVLQNMCQIGSSNRNPVTKSECCCDGGRGWGPHCEICPFQGTVAFKKLC). Residues 2402-2443 (DIDECKVIHDVCRNGECINDRGSYHCICKTGYTPDITGTACV) form the EGF-like 41; calcium-binding domain. 21 cysteine pairs are disulfide-bonded: Cys2406–Cys2418, Cys2413–Cys2427, Cys2429–Cys2442, Cys2448–Cys2459, Cys2455–Cys2468, Cys2470–Cys2483, Cys2489–Cys2500, Cys2496–Cys2509, Cys2511–Cys2522, Cys2528–Cys2541, Cys2535–Cys2550, Cys2552–Cys2565, Cys2571–Cys2581, Cys2577–Cys2590, Cys2592–Cys2605, Cys2611–Cys2622, Cys2617–Cys2631, Cys2633–Cys2646, Cys2652–Cys2663, Cys2659–Cys2672, and Cys2674–Cys2686. In terms of domain architecture, EGF-like 42; calcium-binding spans 2444 to 2484 (DLNECNQAPKPCNFICKNTEGSYQCSCPKGYILQEDGRSCK). O-linked (Glc) serine glycosylation occurs at Ser2465. The region spanning 2485-2523 (DLDECATKQHNCQFLCVNTIGSFACKCPPGFTQHHTACI) is the EGF-like 43; calcium-binding domain. An EGF-like 44; calcium-binding domain is found at 2524-2566 (DNNECTSDINLCGAKGICQNTPGSFTCECQRGFSLDQSGASCE). Ser2547 carries O-linked (Glc) serine glycosylation. One can recognise an EGF-like 45; calcium-binding domain in the interval 2567 to 2606 (DVDECEGNHRCQHGCQNIIGGYRCSCPQGYLQHYQWNQCV). The 41-residue stretch at 2607-2647 (DENECLSAHICGGASCHNTLGSYKCMCPAGFQYEQFSGGCQ) folds into the EGF-like 46; calcium-binding domain. Ser2628 is a glycosylation site (O-linked (Glc) serine). An EGF-like 47; calcium-binding domain is found at 2648-2687 (DINECGSSQAPCSYGCSNTEGGYLCGCPPGYFRIGQGHCV). 2 positions are modified to phosphoserine: Ser2702 and Ser2709. N-linked (GlcNAc...) asparagine glycosylation is found at Asn2734, Asn2750, and Asn2767.

The protein belongs to the fibrillin family. In terms of assembly, interacts with COL16A1. Interacts with integrin alpha-V/beta-3. Interacts with ADAMTS10; this interaction promotes microfibril assembly. Interacts with THSD4; this interaction promotes fibril formation. Interacts (via N-terminal domain) with FBLN2 and FBLN5. Interacts with ELN. Forms a ternary complex with ELN and FBLN2 or FBLN5 and a significant interaction with ELN seen only in the presence of FBLN2 or FBLN5. Interacts (via N-terminal domain) with LTBP2 (via C-terminal domain) in a Ca(+2)-dependent manner. Interacts (via N-terminal domain) with LTBP1 (via C-terminal domain). Interacts with integrins ITGA5:ITGB1, ITGAV:ITGB3 and ITGAV:ITGB6. Interacts (via N-terminal domain) with BMP2, BMP4, BMP7, BMP10 and GDF5. Interacts (via N-terminal domain) with MFAP2 and MFAP5. Interacts with ADAMTSL5. Interacts with MFAP4. Interacts (via N-terminal domain) with TNFSF11 in a Ca(+2)-dependent manner. Interacts (via N-terminal domain) with EFEMP2; this interaction inhibits EFEMP2 binding to LOX and ELN. Cleavage of N- and C-terminus by furin is required for incorporation into the extracellular matrix and assembly into microfibrils. The C-terminus, which corresponds to the Asprosin chain, was initially thought to constitute a propeptide. Fibrillin-1 and Asprosin chains are still linked together during the secretion from cells, but are subsequently separated by furin, an essential step for incorporation of Fibrillin-1 into the nascent microfibrils. In terms of processing, forms intermolecular disulfide bonds either with other fibrillin-1 molecules or with other components of the microfibrils. Post-translationally, O-glycosylated on serine residues by POGLUT2 and POGLUT3 which is necessary for efficient protein secretion.

The protein localises to the secreted. The protein resides in the extracellular space. It is found in the extracellular matrix. In terms of biological role, structural component of the 10-12 nm diameter microfibrils of the extracellular matrix, which conveys both structural and regulatory properties to load-bearing connective tissues. Fibrillin-1-containing microfibrils provide long-term force bearing structural support. In tissues such as the lung, blood vessels and skin, microfibrils form the periphery of the elastic fiber, acting as a scaffold for the deposition of elastin. In addition, microfibrils can occur as elastin-independent networks in tissues such as the ciliary zonule, tendon, cornea and glomerulus where they provide tensile strength and have anchoring roles. Fibrillin-1 also plays a key role in tissue homeostasis through specific interactions with growth factors, such as the bone morphogenetic proteins (BMPs), growth and differentiation factors (GDFs) and latent transforming growth factor-beta-binding proteins (LTBPs), cell-surface integrins and other extracellular matrix protein and proteoglycan components. Regulates osteoblast maturation by controlling TGF-beta bioavailability and calibrating TGF-beta and BMP levels, respectively. Negatively regulates osteoclastogenesis by binding and sequestering an osteoclast differentiation and activation factor TNFSF11. This leads to disruption of TNFSF11-induced Ca(2+) signaling and impairment of TNFSF11-mediated nuclear translocation and activation of transcription factor NFATC1 which regulates genes important for osteoclast differentiation and function. Mediates cell adhesion via its binding to cell surface receptors integrins ITGAV:ITGB3 and ITGA5:ITGB1. Binds heparin and this interaction plays an important role in the assembly of microfibrils. Hormone that targets the liver to increase plasma glucose levels. Secreted by white adipose tissue and circulates in the plasma. Acts in response to fasting and promotes blood glucose elevation by binding to the surface of hepatocytes. Promotes hepatocyte glucose release by activating the protein kinase A activity in the liver, resulting in rapid glucose release into the circulation. This chain is Fibrillin-1, found in Sus scrofa (Pig).